A 273-amino-acid polypeptide reads, in one-letter code: Proteasome subunit beta type-10 (273 aa).

At Met-1 the chain carries N-acetylmethionine. Residues 1–39 (MLKPALEPRGGFSFENCQRNASLERVLPGLKVPHARKTG) constitute a propeptide, removed in mature form. Thr-40 functions as the Nucleophile in the catalytic mechanism. Phosphoserine is present on Ser-230.

Belongs to the peptidase T1B family. As to quaternary structure, the 26S proteasome consists of a 20S proteasome core and two 19S regulatory subunits. The 20S proteasome core is composed of 28 subunits that are arranged in four stacked rings, resulting in a barrel-shaped structure. The two end rings are each formed by seven alpha subunits, and the two central rings are each formed by seven beta subunits. The catalytic chamber with the active sites is on the inside of the barrel. Component of the immunoproteasome, where it displaces the equivalent housekeeping subunit PSMB7. Component of the spermatoproteasome, a form of the proteasome specifically found in testis. (Microbial infection) Interacts with HIV-1 TAT protein. In terms of processing, autocleaved. The resulting N-terminal Thr residue of the mature subunit is responsible for the nucleophile proteolytic activity.

It is found in the cytoplasm. It localises to the nucleus. It catalyses the reaction Cleavage of peptide bonds with very broad specificity.. Functionally, the proteasome is a multicatalytic proteinase complex which is characterized by its ability to cleave peptides with Arg, Phe, Tyr, Leu, and Glu adjacent to the leaving group at neutral or slightly basic pH. The proteasome has an ATP-dependent proteolytic activity. This subunit is involved in antigen processing to generate class I binding peptides. In Homo sapiens (Human), this protein is Proteasome subunit beta type-10 (PSMB10).